We begin with the raw amino-acid sequence, 423 residues long: UPF0229 protein VP0986 (423 aa).

The interval 69–112 (GGVRERVHPGNDQFITGDKIERPKGGGQGSGSGEGNASPDGEGQ) is disordered. A compositionally biased stretch (gly residues) spans 93-102 (GGGQGSGSGE).

Belongs to the UPF0229 family.

The chain is UPF0229 protein VP0986 from Vibrio parahaemolyticus serotype O3:K6 (strain RIMD 2210633).